A 195-amino-acid chain; its full sequence is Oocyte-secreted protein 3 (195 aa).

An N-terminal signal peptide occupies residues 1 to 21 (MKAFVASGLLLLIFGMWRCSG). N-linked (GlcNAc...) asparagine glycosylation occurs at Asn102.

Belongs to the PLAC1 family. As to expression, oocyte-specific.

It is found in the secreted. This Mus musculus (Mouse) protein is Oocyte-secreted protein 3.